The primary structure comprises 250 residues: MIDLNADLGEGFGRWELTDDERLLSVVTSANVACGFHAGDAATMRRVCELAAERGVRIGAQVSYRDLAGFGRRAMDVPPAELAAEVAYQIGALEVFARAAGTRVSYVKPHGALYNRVVHDEGQAGAVVDGVRLADASLPVLGLPGSRLLEVAEKAGLPVVTEAFADRAYTEEGTLVPRGEDGAVVTDPDAVVERSVNLARLGVVDAHSGRRIPVRARSLCLHGDTPGAVELARRVRSRLEASGVRVAAFA.

The protein belongs to the LamB/PxpA family. As to quaternary structure, forms a complex composed of PxpA, PxpB and PxpC.

It catalyses the reaction 5-oxo-L-proline + ATP + 2 H2O = L-glutamate + ADP + phosphate + H(+). Functionally, catalyzes the cleavage of 5-oxoproline to form L-glutamate coupled to the hydrolysis of ATP to ADP and inorganic phosphate. The polypeptide is 5-oxoprolinase subunit A (Streptomyces avermitilis (strain ATCC 31267 / DSM 46492 / JCM 5070 / NBRC 14893 / NCIMB 12804 / NRRL 8165 / MA-4680)).